Consider the following 2920-residue polypeptide: Cadherin-related hmr-1 (2920 aa).

An N-terminal signal peptide occupies residues 1–19; sequence MSWNILLILLISNLDEVLA. Residues 20–2779 lie on the Extracellular side of the membrane; sequence KTLLKLPSNA…AVSKLGISSP (2760 aa). N-linked (GlcNAc...) asparagine glycosylation is found at Asn-72, Asn-243, Asn-253, Asn-339, and Asn-508. Cadherin domains lie at 322 to 422, 425 to 530, 531 to 642, 643 to 747, 749 to 865, 871 to 979, 980 to 1093, 1097 to 1211, 1212 to 1335, 1336 to 1436, 1438 to 1546, 1548 to 1661, 1662 to 1772, and 1772 to 1874; these read SSRS…PPSF, SPLP…PPQF, AKQE…VPTF, TRPL…SAVF, PTSQ…KPEF, YSDI…SPQF, ERPS…APKW, PDCK…VPQF, TVDL…APSF, EEQK…APQF, QQKY…SPIF, ERLF…APFF, EKTR…APHI, and IHGA…EPYT. N-linked (GlcNAc...) asparagine glycosylation is found at Asn-658, Asn-685, Asn-715, and Asn-826. A glycan (N-linked (GlcNAc...) asparagine) is linked at Asn-1177. N-linked (GlcNAc...) asparagine glycosylation is present at Asn-1417. Asn-1646 is a glycosylation site (N-linked (GlcNAc...) asparagine). Asn-1935, Asn-2224, and Asn-2232 each carry an N-linked (GlcNAc...) asparagine glycan. The region spanning 2246 to 2283 is the EGF-like 1 domain; it reads APPACQHSLCHNDGVCHNTNPGFFCECRNDGLKGARCQ. Cystine bridges form between Cys-2250–Cys-2261, Cys-2255–Cys-2270, and Cys-2272–Cys-2282. Residues 2284 to 2478 form the Laminin G-like domain; it reads GTTRSFGGNG…AFEQNSEKGC (195 aa). Residues Asn-2307 and Asn-2332 are each glycosylated (N-linked (GlcNAc...) asparagine). Cystine bridges form between Cys-2452–Cys-2478, Cys-2501–Cys-2515, and Cys-2517–Cys-2526. One can recognise an EGF-like 2 domain in the interval 2492 to 2527; that stretch reads SLNHCIHGDCFADVQGSGAMVAKCVCDPGWGGARCE. A glycan (N-linked (GlcNAc...) asparagine) is linked at Asn-2623. The chain crosses the membrane as a helical span at residues 2780 to 2800; it reads AIILILVSLALLILLVMMMVV. Residues 2801–2920 are Cytoplasmic-facing; sequence YTRRSPGAFE…VTLESIESAQ (120 aa). A Phosphoserine modification is found at Ser-2839. The tract at residues 2858-2891 is disordered; it reads IGGHPPHYPPRGMAPPKDDHELNSKIKDLETDQN. Basic and acidic residues predominate over residues 2873-2887; sequence PKDDHELNSKIKDLE. Ser-2909 is subject to Phosphoserine. A Phosphothreonine modification is found at Thr-2912. Residues Ser-2915 and Ser-2918 each carry the phosphoserine modification.

Monomer in solution. Isoform a is a component of a core catenin-cadherin complex consisting of hmr-1, hmp-1 and hmp-2; the complex localizes to adherens junctions. Isoform a interacts with hmp-2; the interaction is direct. Isoform a interacts (via intracellular domain) with jac-1. Post-translationally, phosphorylation at T-2912 increases the binding affinity for hmp-2. Sumoylated. Sumoylation prevents accumulation at adherens junctions and decreases the binding affinity for hmp-2. As to expression, expressed in epidermal cells (at protein level). Neuron-specific.

It localises to the cell membrane. The protein localises to the cell junction. Its subcellular location is the adherens junction. The protein resides in the cell projection. It is found in the dendrite. Its function is as follows. Cadherins are calcium-dependent cell adhesion proteins. They preferentially interact with themselves in a homophilic manner in connecting cells; cadherins may thus contribute to the sorting of heterogeneous cell types. Required for adherens junction assembly and connecting adherens junctions to the cytoskeleton. Functionally, isoform a is required for cell migration during body enclosure and cell shape changes during body elongation. Required for proper localization of other junctional components, such as hmp-1, hmp-2, jac-1 and pac-1. Recruitment of pac-1 is required to establish cell polarity, independent of its role in cell adhesion. Required for primodial germ cell ingression and adherence to endodermal cells during gastrulation. Isoform b is involved in axonal guidance in a subset of motor neurons. This is Cadherin-related hmr-1 from Caenorhabditis elegans.